The following is a 203-amino-acid chain: MLTVALPKGRIADETLNIFSKIFNDEFKFEDRKLTMIKDNFEFLMVRNQDIPTYVTEGAADIGVVGLDVLEEHNCDVLRLLNLKLGKCKVCIGIKNSDTLDYTKPELKIATKMPNITKNYFASKAVAAKIIKLYGSIELAPIVGLSDAIVDIVETGTTMKQNGLKVADIIMESSAHLIANKNSFITKRDEILSLYHKINSVIN.

This sequence belongs to the ATP phosphoribosyltransferase family. Short subfamily. Heteromultimer composed of HisG and HisZ subunits.

Its subcellular location is the cytoplasm. It carries out the reaction 1-(5-phospho-beta-D-ribosyl)-ATP + diphosphate = 5-phospho-alpha-D-ribose 1-diphosphate + ATP. It participates in amino-acid biosynthesis; L-histidine biosynthesis; L-histidine from 5-phospho-alpha-D-ribose 1-diphosphate: step 1/9. Catalyzes the condensation of ATP and 5-phosphoribose 1-diphosphate to form N'-(5'-phosphoribosyl)-ATP (PR-ATP). Has a crucial role in the pathway because the rate of histidine biosynthesis seems to be controlled primarily by regulation of HisG enzymatic activity. This is ATP phosphoribosyltransferase from Campylobacter fetus subsp. fetus (strain 82-40).